Consider the following 359-residue polypeptide: Nicotinate N-methyltransferase 1 (359 aa).

Residue Asp226 participates in S-adenosyl-L-methionine binding.

Belongs to the class I-like SAM-binding methyltransferase superfamily. Cation-independent O-methyltransferase family. In terms of tissue distribution, highly expressed in anthers, pistils, developing siliques, and developing seeds.

The protein localises to the cytoplasm. The protein resides in the cytosol. It catalyses the reaction nicotinate + S-adenosyl-L-methionine = N-methylnicotinate + S-adenosyl-L-homocysteine. In terms of biological role, involved in nicotinate detoxification in planta. Catalyzes the conversion of nicotinate to N-methylnicotinate, which is a detoxified form of endogenous nicotinate in planta. The chain is Nicotinate N-methyltransferase 1 from Arabidopsis thaliana (Mouse-ear cress).